Here is a 158-residue protein sequence, read N- to C-terminus: Snaclec coagulation factor X-activating enzyme light chain 2 (158 aa).

Positions M1–G24 are cleaved as a signal peptide. Cystine bridges form between C27–C38, C55–C152, and C127–C144. Positions Y34 to K153 constitute a C-type lectin domain. N-linked (GlcNAc...) (complex) asparagine glycosylation occurs at N82.

Belongs to the snaclec family. Heterotrimer; disulfide-linked. The heterotrimer consists of 1 heavy chain (a metalloproteinase) and 2 light chains: LC1 and LC2. N-glycosylated; probably required for conformation. Removal of easily accessible sugars does not change its functional capacity, but removal of the core sugars with N-glycanase causes a virtually complete loss of enzyme activity, apparently as a result of major conformational changes in the molecule. Not O-glycosylated. Expressed by the venom gland.

The protein localises to the secreted. Regulatory subunit of the blood coagulation factor X- and IX-activating enzyme. The enzyme activates coagulation factor X (F10) by cleaving the Arg-Ile bond and is also able to activate coagulation factor IX (F9) and protein S (PROS1) by specific cleavage of Arg-Ile and Arg-Val bonds. May serve as an exosite by which the enzyme recognizes and binds to the Gla domain of factor X (F10) and factor IX (F9) in a calcium-dependent manner. The sequence is that of Snaclec coagulation factor X-activating enzyme light chain 2 (LC2) from Daboia siamensis (Eastern Russel's viper).